A 389-amino-acid polypeptide reads, in one-letter code: Fructose-1,6-bisphosphate aldolase/phosphatase (389 aa).

The Proton acceptor; for FBP phosphatase activity role is filled by Asp-17. Mg(2+) contacts are provided by Asp-17, His-24, Asp-57, and Asp-58. His-24 lines the beta-D-fructose 1,6-bisphosphate pocket. His-24 contacts dihydroxyacetone phosphate. Tyr-95 is a beta-D-fructose 1,6-bisphosphate binding site. Gln-99 serves as a coordination point for Mg(2+). A beta-D-fructose 1,6-bisphosphate-binding site is contributed by 108 to 109; sequence GN. Asp-136 is a Mg(2+) binding site. Lys-137 contacts beta-D-fructose 1,6-bisphosphate. Lys-137 serves as a coordination point for dihydroxyacetone phosphate. Catalysis depends on Tyr-233, which acts as the Proton donor/acceptor; for FBP aldolase activity. Mg(2+)-binding residues include Lys-236, Asp-237, and Asp-238. Lys-236 acts as the Schiff-base intermediate with DHAP; for FBP aldolase activity in catalysis. Residues 246–247, Arg-270, Asp-291, and Tyr-352 contribute to the beta-D-fructose 1,6-bisphosphate site; that span reads QS. Dihydroxyacetone phosphate is bound by residues Arg-270 and Asp-291.

It belongs to the FBP aldolase/phosphatase family. In terms of assembly, homooctamer; dimer of tetramers. The cofactor is Mg(2+).

The enzyme catalyses beta-D-fructose 1,6-bisphosphate + H2O = beta-D-fructose 6-phosphate + phosphate. It catalyses the reaction beta-D-fructose 1,6-bisphosphate = D-glyceraldehyde 3-phosphate + dihydroxyacetone phosphate. The protein operates within carbohydrate biosynthesis; gluconeogenesis. Its function is as follows. Catalyzes two subsequent steps in gluconeogenesis: the aldol condensation of dihydroxyacetone phosphate (DHAP) and glyceraldehyde-3-phosphate (GA3P) to fructose-1,6-bisphosphate (FBP), and the dephosphorylation of FBP to fructose-6-phosphate (F6P). This is Fructose-1,6-bisphosphate aldolase/phosphatase from Methanocaldococcus jannaschii (strain ATCC 43067 / DSM 2661 / JAL-1 / JCM 10045 / NBRC 100440) (Methanococcus jannaschii).